Consider the following 2925-residue polypeptide: TPR and ankyrin repeat-containing protein 1 (2925 aa).

TPR repeat units follow at residues 15–48 (AVLL…DPTY) and 50–82 (KGYY…VQRS). ANK repeat units lie at residues 168–198 (EKYV…SVET), 203–232 (PLHA…EWKG), 240–276 (DGCT…DPTL), 463–492 (SQER…DPRA), 497–518 (EGDT…DIGF), and 546–575 (NGNT…KFDI). Disordered stretches follow at residues 612-669 (SRQD…LPGT), 706-741 (PEDC…DCSE), and 1077-1103 (VEPG…SIEV). The segment covering 624-641 (SKSTAPGHTSQLKSQGSF) has biased composition (polar residues). Residues 720–730 (AGKEGKKDDKP) are compositionally biased toward basic and acidic residues. Over residues 1085–1103 (GGEEEEEEEDEEEEDSIEV) the composition is skewed to acidic residues. TPR repeat units lie at residues 1699–1732 (PAEW…EKEK) and 1793–1826 (LGKI…DLAL). A coiled-coil region spans residues 2301–2330 (EEFEKLLHQEEDNYNRELKALESEKDERGR).

The polypeptide is TPR and ankyrin repeat-containing protein 1 (TRANK1) (Homo sapiens (Human)).